A 537-amino-acid polypeptide reads, in one-letter code: Probable protein kinase UbiB (537 aa).

Residues 30–47 (LLPWWLRALGYLLPWRWL) form a helical membrane-spanning segment. The 365-residue stretch at 126-490 (RFDSEPLASA…KRERHDHHLL (365 aa)) folds into the Protein kinase domain. Residues 132-140 (LASASVAQV) and Lys154 each bind ATP. Residue Asp289 is the Proton acceptor of the active site. Transmembrane regions (helical) follow at residues 489-507 (LLRL…LALQ) and 513-530 (ANAW…YLLV).

The protein belongs to the ABC1 family. UbiB subfamily.

The protein localises to the cell inner membrane. The protein operates within cofactor biosynthesis; ubiquinone biosynthesis [regulation]. Is probably a protein kinase regulator of UbiI activity which is involved in aerobic coenzyme Q (ubiquinone) biosynthesis. This chain is Probable protein kinase UbiB, found in Azotobacter vinelandii (strain DJ / ATCC BAA-1303).